A 419-amino-acid chain; its full sequence is UDP-N-acetylglucosamine 1-carboxyvinyltransferase (419 aa).

A phosphoenolpyruvate-binding site is contributed by 22 to 23; sequence KN. R91 is a UDP-N-acetyl-alpha-D-glucosamine binding site. The active-site Proton donor is C115. C115 carries the 2-(S-cysteinyl)pyruvic acid O-phosphothioketal modification. UDP-N-acetyl-alpha-D-glucosamine-binding positions include 120-124, 160-163, D305, and V327; these read RPVDL and KVSV.

The protein belongs to the EPSP synthase family. MurA subfamily.

Its subcellular location is the cytoplasm. The enzyme catalyses phosphoenolpyruvate + UDP-N-acetyl-alpha-D-glucosamine = UDP-N-acetyl-3-O-(1-carboxyvinyl)-alpha-D-glucosamine + phosphate. It participates in cell wall biogenesis; peptidoglycan biosynthesis. Its function is as follows. Cell wall formation. Adds enolpyruvyl to UDP-N-acetylglucosamine. The protein is UDP-N-acetylglucosamine 1-carboxyvinyltransferase of Shigella boydii serotype 18 (strain CDC 3083-94 / BS512).